An 83-amino-acid polypeptide reads, in one-letter code: Sulfur carrier protein TusA (83 aa).

The active-site Cysteine persulfide intermediate is the Cys19.

The protein belongs to the sulfur carrier protein TusA family.

The protein resides in the cytoplasm. Functionally, sulfur carrier protein which probably makes part of a sulfur-relay system. The sequence is that of Sulfur carrier protein TusA from Vibrio atlanticus (strain LGP32) (Vibrio splendidus (strain Mel32)).